Here is a 450-residue protein sequence, read N- to C-terminus: Tol-Pal system protein TolB (450 aa).

The first 47 residues, Met-1 to Ala-47, serve as a signal peptide directing secretion.

The protein belongs to the TolB family. As to quaternary structure, the Tol-Pal system is composed of five core proteins: the inner membrane proteins TolA, TolQ and TolR, the periplasmic protein TolB and the outer membrane protein Pal. They form a network linking the inner and outer membranes and the peptidoglycan layer.

It localises to the periplasm. Its function is as follows. Part of the Tol-Pal system, which plays a role in outer membrane invagination during cell division and is important for maintaining outer membrane integrity. The sequence is that of Tol-Pal system protein TolB from Cupriavidus pinatubonensis (strain JMP 134 / LMG 1197) (Cupriavidus necator (strain JMP 134)).